The following is a 251-amino-acid chain: MNKVRTCWNEGRPALAGWLQLPGTLHAEALARLDYDAVVIDMQHSPIDFGQVAPMLIAIELGGAEPFVRTQVNDPSDIMKLLDAGAYGIIAPMVNTRAEAQTLASALHYSPRGLRSFGPRRPSLRYGSGYLAQASETVVGLAMIETREALANIDEILSVDGIDGVFIGPTDLALDLGHAPLVDTEEAEVVSAIAHVRERAHAAGKRVGIFCGSGGFARVKLAEGFDFVTAAPDLAMLSAAARQVIADARAL.

The Proton acceptor role is filled by His44. Arg69 is a binding site for 3-hydroxypyruvate. Glu145 serves as a coordination point for Mg(2+). 3-hydroxypyruvate contacts are provided by Thr170 and Asp171. Mg(2+) is bound at residue Asp171.

This sequence belongs to the HpcH/HpaI aldolase family. In terms of assembly, homohexamer. Trimer of homodimers. Mn(2+) serves as cofactor. Requires Mg(2+) as cofactor. It depends on Co(2+) as a cofactor. The cofactor is Zn(2+).

The catalysed reaction is D-glyceraldehyde + 3-hydroxypyruvate = 2-dehydro-D-galactonate. It carries out the reaction D-glyceraldehyde + pyruvate = 2-dehydro-3-deoxy-L-galactonate. It catalyses the reaction L-glyceraldehyde + 3-hydroxypyruvate = (3S,4S,5S)-3,4,5,6-tetrahydroxy-2-oxohexanoate. The enzyme catalyses (R)-lactaldehyde + 3-hydroxypyruvate = (3S,4S,5R)-3,4,5-trihydroxy-2-oxohexanoate. The catalysed reaction is (R)-lactaldehyde + 3-hydroxypyruvate = (3S,4R,5R)-3,4,5-trihydroxy-2-oxohexanoate. It carries out the reaction (S)-lactaldehyde + 3-hydroxypyruvate = (3S,4S,5S)-3,4,5-trihydroxy-2-oxohexanoate. It catalyses the reaction D-erythrose + 3-hydroxypyruvate = (3S,4S,5R,6R)-3,4,5,6,7-pentahydroxy-2-oxoheptanoate. Its activity is regulated as follows. Binding of substrate induces a dynamic movement of the metal cofactor between an inactive coordination sphere to a catalytically active one. When oxaloacetate is used as substrate, activity is increased in the presence of micromolar concentrations of inorganic phosphate. The phosphate does not improve the binding of the substrate, but exclusively increases its rate of decarboxylation. Excessive phosphate concentrations negatively affect the reaction rate by removing the metal cofactor. Aldolase which can catalyze in vitro the aldolisation reaction between hydroxypyruvate (HPA) or pyruvate (PA) and D-glyceraldehyde (D-GA). The condensation of hydroxypyruvate and D-glyceraldehyde produces 2-dehydro-D-galactonate as the major product. The condensation of pyruvate and D-glyceraldehyde produces 2-dehydro-3-deoxy-L-galactonate. Can use other electrophilic substrates such as L-glyceraldehyde, D- and L-lactaldehyde and D-erythrose. Also catalyzes the retro-aldol type decarboxylation of oxaloacetate, a general property of known pyruvate aldolases. The protein is Hydroxypyruvate/pyruvate aldolase of Rhizorhabdus wittichii (strain DSM 6014 / CCUG 31198 / JCM 15750 / NBRC 105917 / EY 4224 / RW1) (Sphingomonas wittichii).